Consider the following 125-residue polypeptide: Small ribosomal subunit protein uS12c (125 aa).

This sequence belongs to the universal ribosomal protein uS12 family. Part of the 30S ribosomal subunit.

The protein localises to the plastid. With S4 and S5 plays an important role in translational accuracy. Located at the interface of the 30S and 50S subunits. In Euglena longa (Euglenophycean alga), this protein is Small ribosomal subunit protein uS12c (rps12).